A 301-amino-acid polypeptide reads, in one-letter code: Diaminopimelate epimerase (301 aa).

Substrate is bound by residues asparagine 15, glutamine 47, and asparagine 67. Cysteine 76 (proton donor) is an active-site residue. Substrate is bound by residues 77-78 (GN), asparagine 163, asparagine 197, and 215-216 (ER). Cysteine 224 functions as the Proton acceptor in the catalytic mechanism. 225–226 (GS) lines the substrate pocket. The disordered stretch occupies residues 280-301 (SGSLDPSTGLWSRDGTQEAGAR).

The protein belongs to the diaminopimelate epimerase family. In terms of assembly, homodimer.

It is found in the cytoplasm. The catalysed reaction is (2S,6S)-2,6-diaminopimelate = meso-2,6-diaminopimelate. The protein operates within amino-acid biosynthesis; L-lysine biosynthesis via DAP pathway; DL-2,6-diaminopimelate from LL-2,6-diaminopimelate: step 1/1. Functionally, catalyzes the stereoinversion of LL-2,6-diaminopimelate (L,L-DAP) to meso-diaminopimelate (meso-DAP), a precursor of L-lysine and an essential component of the bacterial peptidoglycan. This Rhizobium leguminosarum bv. trifolii (strain WSM2304) protein is Diaminopimelate epimerase.